Consider the following 156-residue polypeptide: MAEEINNQEVQPEFHIQRVYTKDVSFEAPNTPHIFQKEWQPDVKLDMDTKTNILADSVYEVVLTLTVTCKLETETAFLCEVQQAGIFTIGNLPEPQLAHCLAAFCPNILFPYAREAVSNLVSKGSFPQLNLAPVNFDALFAQHMAQAQAQQATAEA.

Belongs to the SecB family. Homotetramer, a dimer of dimers. One homotetramer interacts with 1 SecA dimer.

The protein localises to the cytoplasm. Its function is as follows. One of the proteins required for the normal export of preproteins out of the cell cytoplasm. It is a molecular chaperone that binds to a subset of precursor proteins, maintaining them in a translocation-competent state. It also specifically binds to its receptor SecA. This is Protein-export protein SecB from Aeromonas hydrophila subsp. hydrophila (strain ATCC 7966 / DSM 30187 / BCRC 13018 / CCUG 14551 / JCM 1027 / KCTC 2358 / NCIMB 9240 / NCTC 8049).